The following is a 71-amino-acid chain: Vitellogenin-A1 (71 aa).

The signal sequence occupies residues 1-15; it reads MRGIILALLLAIAGS. One can recognise a Vitellogenin domain in the interval 24–71; it reads FSESKTSVYNYEAVILNGFPESGLSRAGIKINCKVEISAYAQRSYFLK.

In terms of tissue distribution, produced by the liver, secreted into the blood and then sequestered by receptor mediated endocytosis into growing oocytes, where it is generally cleaved, giving rise to the respective yolk components.

Precursor of the major egg-yolk proteins that are sources of nutrients during early development of oviparous organisms. In Xenopus laevis (African clawed frog), this protein is Vitellogenin-A1.